A 244-amino-acid chain; its full sequence is Tetraspanin-7 (244 aa).

Over 1–11 (METKPVITCLK) the chain is Cytoplasmic. A helical membrane pass occupies residues 12 to 35 (TLLIIYSFVFWITGVILLAVGVWG). Over 36–51 (KLTLGTYISLIAENST) the chain is Extracellular. An N-linked (GlcNAc...) asparagine glycan is attached at N49. Residues 52-70 (NAPYVLIGTGTTIVVFGLF) traverse the membrane as a helical segment. Topologically, residues 71-81 (GCFATCRGSPW) are cytoplasmic. A helical membrane pass occupies residues 82 to 107 (MLKLYAMFLSLVFLAELVAGISGFVF). At 108–208 (RHEIKDTFLR…LVTSFMETNM (101 aa)) the chain is on the extracellular side. Residues N150, N153, N172, and N183 are each glycosylated (N-linked (GlcNAc...) asparagine). A helical membrane pass occupies residues 209–229 (GIIAGVAFGIAFSQLIGMLLA). The Cytoplasmic segment spans residues 230–244 (CCLSRFITANQYEMV).

This sequence belongs to the tetraspanin (TM4SF) family.

It is found in the membrane. May be involved in cell proliferation and cell motility. This chain is Tetraspanin-7 (TSPAN7), found in Pan troglodytes (Chimpanzee).